A 616-amino-acid chain; its full sequence is Dihydroxy-acid dehydratase (616 aa).

D81 contributes to the Mg(2+) binding site. Position 122 (C122) interacts with [2Fe-2S] cluster. Residues D123 and K124 each contribute to the Mg(2+) site. The residue at position 124 (K124) is an N6-carboxylysine. [2Fe-2S] cluster is bound at residue C195. E491 is a Mg(2+) binding site. S517 serves as the catalytic Proton acceptor.

This sequence belongs to the IlvD/Edd family. As to quaternary structure, homodimer. It depends on [2Fe-2S] cluster as a cofactor. Mg(2+) serves as cofactor.

The catalysed reaction is (2R)-2,3-dihydroxy-3-methylbutanoate = 3-methyl-2-oxobutanoate + H2O. It carries out the reaction (2R,3R)-2,3-dihydroxy-3-methylpentanoate = (S)-3-methyl-2-oxopentanoate + H2O. It participates in amino-acid biosynthesis; L-isoleucine biosynthesis; L-isoleucine from 2-oxobutanoate: step 3/4. It functions in the pathway amino-acid biosynthesis; L-valine biosynthesis; L-valine from pyruvate: step 3/4. Its function is as follows. Functions in the biosynthesis of branched-chain amino acids. Catalyzes the dehydration of (2R,3R)-2,3-dihydroxy-3-methylpentanoate (2,3-dihydroxy-3-methylvalerate) into 2-oxo-3-methylpentanoate (2-oxo-3-methylvalerate) and of (2R)-2,3-dihydroxy-3-methylbutanoate (2,3-dihydroxyisovalerate) into 2-oxo-3-methylbutanoate (2-oxoisovalerate), the penultimate precursor to L-isoleucine and L-valine, respectively. The chain is Dihydroxy-acid dehydratase from Shigella sonnei (strain Ss046).